The chain runs to 954 residues: Regulatory protein FlaEY (954 aa).

Its function is as follows. Functions in trans to modulate the level of transcription of the flagellin genes and several genes encoding chemotaxis functions. It is itself temporally controlled. This Caulobacter vibrioides (strain ATCC 19089 / CIP 103742 / CB 15) (Caulobacter crescentus) protein is Regulatory protein FlaEY (flaEY).